The following is a 465-amino-acid chain: MFIPVIMAGGSGSRLWPLSRSAFPKQFLSLDSSSQHTMLQATIERLQGLPIAEPIVISNEDHRFIVAEQIRRYGKKSRIILEPAGRNTAPAIALAAFTAIEQEDDPVLLVLAADHFVKNKSAFQAAISQAAQQAEAGKLATFGIVPTTPETGYGYIHRGEEVTQGTYEINSFVEKPQLNIAEQYLASGEYYWNSGCFMFKASVFLNELKQHSPEIYRQCELAMQGLSHDYDFIRVGVEEFLKCPDDSIDYAVMEHTKLGVVVSMDAGWSDVGSWSALWEVSDKDADGNVCQGDAILSGTSNCYIYAPNKLVAAVGLKDIVVVETKDAVLVADKNQVQEVKKIVEHLKAENRAEYREHRERYRPWGKSDAIDKGERYKVNRITVEPGKKQSLQMHYHRAEHWVVVSGTAKVTCEGNVKVITENQSLYIPIGTNHMIENPGKIPLELIEIQSGSYLNEDDVVRFEDK.

The protein belongs to the mannose-6-phosphate isomerase type 2 family.

It catalyses the reaction alpha-D-mannose 1-phosphate + GTP + H(+) = GDP-alpha-D-mannose + diphosphate. It functions in the pathway nucleotide-sugar biosynthesis; GDP-alpha-D-mannose biosynthesis; GDP-alpha-D-mannose from alpha-D-mannose 1-phosphate (GTP route): step 1/1. It participates in bacterial outer membrane biogenesis; LPS O-antigen biosynthesis. This Vibrio cholerae serotype O1 (strain ATCC 39315 / El Tor Inaba N16961) protein is Putative mannose-1-phosphate guanylyltransferase (rfbA).